A 492-amino-acid chain; its full sequence is Spore germination protein XA (492 aa).

7 helical membrane-spanning segments follow: residues 246–266 (FILLVDGSPTATIAPVSFPFF), 285–305 (LLSLFGIAISIFLPGFWVALV), 325–345 (EGIPFPAPLEGMIMITLFELL), 353–373 (PAAFGQTLSVVGGLIIGQAAI), 377–397 (FVSPSMVVMIAISVVSTFTLV), 413–433 (FLMSSFLGIVGFICSILLIVI), and 442–462 (GLPFLAPYSPPVFSSMLPSTF).

It belongs to the GerABKA family.

The protein resides in the cell membrane. Its function is as follows. May allow B.anthracis to germinate within phagocytic cells and therefore involved in virulence. This is Spore germination protein XA (gerXA) from Bacillus anthracis.